The primary structure comprises 408 residues: UPF0761 membrane protein NMC0462 (408 aa).

6 consecutive transmembrane segments (helical) span residues 43 to 63 (LLAL…FPVF), 100 to 120 (LTAI…RTID), 139 to 159 (FLVY…GISF), 176 to 196 (WSGA…LWGL), 210 to 230 (AFVG…LFTW), and 248 to 268 (VPFF…GAVL).

It belongs to the UPF0761 family.

Its subcellular location is the cell inner membrane. The protein is UPF0761 membrane protein NMC0462 of Neisseria meningitidis serogroup C / serotype 2a (strain ATCC 700532 / DSM 15464 / FAM18).